The following is a 123-amino-acid chain: Large ribosomal subunit protein eL8 (123 aa).

Belongs to the eukaryotic ribosomal protein eL8 family. As to quaternary structure, may be present in up to 3 copies per 70S ribosome. Part of the 50S ribosomal subunit, where it binds 23S rRNA at its canonical site near the L1 stalk, as well as a possible second 50S binding site near helix 25 and a possible third site on the beak of the 30S subunit. Component of box C/D small ribonucleoprotein (sRNP) particles that contain rpl7ae, FlpA and nop5, plus a guide RNA. These sRNP particles form homodimers, giving rise to an asymmetric holoenzyme. Probably part of the RNase P complex.

Its subcellular location is the cytoplasm. In terms of biological role, multifunctional RNA-binding protein that recognizes the K-turn motif in ribosomal RNA, the RNA component of RNase P, box H/ACA, box C/D and box C'/D' sRNAs. Component of the 70S ribosome. Component of a box C/D small ribonucleoprotein (sRNP) particle that is involved in pre-rRNA and tRNA processing. Utilizes the methyl donor S-adenosyl-L-methionine to catalyze the site-specific 2'-hydroxyl methylation of ribose moieties in rRNA and tRNA. Site specificity is provided by a guide RNA that base pairs with the substrate. Methylation occurs at a characteristic distance from the sequence involved in base pairing with the guide RNA. This is Large ribosomal subunit protein eL8 from Pyrococcus furiosus (strain ATCC 43587 / DSM 3638 / JCM 8422 / Vc1).